An 80-amino-acid chain; its full sequence is Exodeoxyribonuclease 7 small subunit (80 aa).

This sequence belongs to the XseB family. Heterooligomer composed of large and small subunits.

The protein resides in the cytoplasm. The catalysed reaction is Exonucleolytic cleavage in either 5'- to 3'- or 3'- to 5'-direction to yield nucleoside 5'-phosphates.. Bidirectionally degrades single-stranded DNA into large acid-insoluble oligonucleotides, which are then degraded further into small acid-soluble oligonucleotides. This is Exodeoxyribonuclease 7 small subunit from Pseudomonas putida (strain GB-1).